Consider the following 172-residue polypeptide: Acetolactate synthase small subunit (172 aa).

An ACT domain is found at 4–79 (IITLTVVNRS…DVLKVTDITN (76 aa)).

Belongs to the acetolactate synthase small subunit family. In terms of assembly, dimer of large and small chains.

The catalysed reaction is 2 pyruvate + H(+) = (2S)-2-acetolactate + CO2. The protein operates within amino-acid biosynthesis; L-isoleucine biosynthesis; L-isoleucine from 2-oxobutanoate: step 1/4. Its pathway is amino-acid biosynthesis; L-valine biosynthesis; L-valine from pyruvate: step 1/4. This chain is Acetolactate synthase small subunit (ilvH), found in Bacillus subtilis (strain 168).